Here is a 126-residue protein sequence, read N- to C-terminus: Topoisomerase I damage affected protein 2 (126 aa).

S2 is subject to N-acetylserine.

It belongs to the TDA2 family.

It is found in the cytoplasm. The protein localises to the cell projection. The polypeptide is Topoisomerase I damage affected protein 2 (TDA2) (Saccharomyces cerevisiae (strain JAY291) (Baker's yeast)).